Consider the following 186-residue polypeptide: MKLLIDFFPIILFFAAFKVWGIYVATAVAIAATVVQIGYIRLKHGKVEPLQWLSLGVIVLFGGATLLAHSETFIKWKPTVLYWLMGGTLLVGQLVFRKNFIQSLMGAQIDLPAPVWRNLNWGWTGFFATMGVLNLWVAYNFDTDTWVNFKLFGGIGLMFAFVIAQALYLSRHVKDEGDAAPKDLQP.

A run of 5 helical transmembrane segments spans residues 10 to 30 (IILF…AVAI), 47 to 67 (VEPL…ATLL), 76 to 96 (WKPT…QLVF), 121 to 141 (WGWT…AYNF), and 149 to 169 (FKLF…ALYL).

This sequence belongs to the YciB family.

Its subcellular location is the cell inner membrane. Plays a role in cell envelope biogenesis, maintenance of cell envelope integrity and membrane homeostasis. This Acidovorax sp. (strain JS42) protein is Inner membrane-spanning protein YciB.